The following is a 241-amino-acid chain: Triosephosphate isomerase (241 aa).

9–11 (NWK) is a substrate binding site. The Electrophile role is filled by H96. E165 acts as the Proton acceptor in catalysis. Substrate is bound by residues G171, S204, and 225–226 (GG).

It belongs to the triosephosphate isomerase family. In terms of assembly, homodimer.

It localises to the cytoplasm. The catalysed reaction is D-glyceraldehyde 3-phosphate = dihydroxyacetone phosphate. The protein operates within carbohydrate biosynthesis; gluconeogenesis. It participates in carbohydrate degradation; glycolysis; D-glyceraldehyde 3-phosphate from glycerone phosphate: step 1/1. Functionally, involved in the gluconeogenesis. Catalyzes stereospecifically the conversion of dihydroxyacetone phosphate (DHAP) to D-glyceraldehyde-3-phosphate (G3P). The protein is Triosephosphate isomerase of Acaryochloris marina (strain MBIC 11017).